Consider the following 703-residue polypeptide: Protein CNGC15c (703 aa).

Basic and acidic residues predominate over residues 1–10 (MGFDNPRSER). The tract at residues 1-23 (MGFDNPRSERFEDDPEISKIPTT) is disordered. 5 helical membrane-spanning segments follow: residues 91 to 111 (IFLV…YLPV), 179 to 199 (GFWL…WIII), 216 to 236 (FFII…SSQI), 255 to 275 (LMLY…LSIE), and 372 to 392 (FIGE…LFAL). Residue 480-565 (LFDQMDERML…WALDPRPSVI (86 aa)) participates in a nucleoside 3',5'-cyclic phosphate binding. Residues 616-644 (RTWAACFIQAAWRRHKKRKEAAELRAKEN) enclose the IQ domain. Residues 676 to 703 (KGVNMHSGTNSGVVSSLQKPTEPDFSDE) are disordered. A compositionally biased stretch (polar residues) spans 681 to 694 (HSGTNSGVVSSLQK).

The protein belongs to the cyclic nucleotide-gated cation channel (TC 1.A.1.5) family. As to quaternary structure, interacts (via N-terminus) with DMI1 (via c-terminus). The Nod factor has no effect on this interaction, implying that the complex is maintained after activation. As to expression, expressed in roots, stems, leaves, flowers and pods.

The protein resides in the nucleus membrane. Cyclic nucleotide-gated channel involved in the establishment of both rhizobial and mycorrhizal associations. Required for full activation of nuclear-localized Ca(2+) oscillations by Nod and Myc factors. Simultaneous activation of the K(+)-permeable channel DMI1 and the Ca(2+) channel CNGC15 can give rise to sustained Ca(2+) oscillations. May function during fertilization in both female and male gametophytic Ca(2+) signaling. The chain is Protein CNGC15c from Medicago truncatula (Barrel medic).